Here is a 63-residue protein sequence, read N- to C-terminus: Small ribosomal subunit protein bS21 (63 aa).

The protein belongs to the bacterial ribosomal protein bS21 family.

The protein is Small ribosomal subunit protein bS21 of Bacteroides fragilis (strain ATCC 25285 / DSM 2151 / CCUG 4856 / JCM 11019 / LMG 10263 / NCTC 9343 / Onslow / VPI 2553 / EN-2).